Here is a 601-residue protein sequence, read N- to C-terminus: Elongation factor 4 (601 aa).

The 182-residue stretch at 8-189 (EQIRNFGIIA…LIVRKAPPPK (182 aa)) folds into the tr-type G domain. A GTP-binding site is contributed by 20-25 (DHGKST).

This sequence belongs to the TRAFAC class translation factor GTPase superfamily. Classic translation factor GTPase family. LepA subfamily.

The protein resides in the cell membrane. It catalyses the reaction GTP + H2O = GDP + phosphate + H(+). Functionally, required for accurate and efficient protein synthesis under certain stress conditions. May act as a fidelity factor of the translation reaction, by catalyzing a one-codon backward translocation of tRNAs on improperly translocated ribosomes. Back-translocation proceeds from a post-translocation (POST) complex to a pre-translocation (PRE) complex, thus giving elongation factor G a second chance to translocate the tRNAs correctly. Binds to ribosomes in a GTP-dependent manner. This is Elongation factor 4 from Tropheryma whipplei (strain Twist) (Whipple's bacillus).